The chain runs to 255 residues: 3-deoxy-manno-octulosonate cytidylyltransferase (255 aa).

This sequence belongs to the KdsB family.

The protein localises to the cytoplasm. The catalysed reaction is 3-deoxy-alpha-D-manno-oct-2-ulosonate + CTP = CMP-3-deoxy-beta-D-manno-octulosonate + diphosphate. It participates in nucleotide-sugar biosynthesis; CMP-3-deoxy-D-manno-octulosonate biosynthesis; CMP-3-deoxy-D-manno-octulosonate from 3-deoxy-D-manno-octulosonate and CTP: step 1/1. The protein operates within bacterial outer membrane biogenesis; lipopolysaccharide biosynthesis. Activates KDO (a required 8-carbon sugar) for incorporation into bacterial lipopolysaccharide in Gram-negative bacteria. This is 3-deoxy-manno-octulosonate cytidylyltransferase from Glaesserella parasuis serovar 5 (strain SH0165) (Haemophilus parasuis).